The chain runs to 205 residues: Ribosomal RNA small subunit methyltransferase G (205 aa).

S-adenosyl-L-methionine contacts are provided by residues glycine 76, leucine 81, 127–128 (IE), and arginine 140.

Belongs to the methyltransferase superfamily. RNA methyltransferase RsmG family.

The protein resides in the cytoplasm. It catalyses the reaction guanosine(527) in 16S rRNA + S-adenosyl-L-methionine = N(7)-methylguanosine(527) in 16S rRNA + S-adenosyl-L-homocysteine. In terms of biological role, specifically methylates the N7 position of guanine in position 527 of 16S rRNA. This Francisella tularensis subsp. holarctica (strain FTNF002-00 / FTA) protein is Ribosomal RNA small subunit methyltransferase G.